Reading from the N-terminus, the 119-residue chain is Protein TusC (119 aa).

It belongs to the DsrF/TusC family. As to quaternary structure, heterohexamer, formed by a dimer of trimers. The hexameric TusBCD complex contains 2 copies each of TusB, TusC and TusD. The TusBCD complex interacts with TusE.

It is found in the cytoplasm. Part of a sulfur-relay system required for 2-thiolation of 5-methylaminomethyl-2-thiouridine (mnm(5)s(2)U) at tRNA wobble positions. This is Protein TusC from Escherichia fergusonii (strain ATCC 35469 / DSM 13698 / CCUG 18766 / IAM 14443 / JCM 21226 / LMG 7866 / NBRC 102419 / NCTC 12128 / CDC 0568-73).